The following is a 342-amino-acid chain: Dihydroorotase (342 aa).

Zn(2+) contacts are provided by His-13 and His-15. Residues 15-17 and Asn-41 each bind substrate; that span reads HLR. Zn(2+) contacts are provided by Lys-98, His-135, and His-173. Lys-98 carries the post-translational modification N6-carboxylysine. His-135 lines the substrate pocket. Residue Leu-218 coordinates substrate. Asp-246 contacts Zn(2+). Residue Asp-246 is part of the active site. Positions 250 and 262 each coordinate substrate.

Belongs to the metallo-dependent hydrolases superfamily. DHOase family. Class II DHOase subfamily. In terms of assembly, homodimer. Requires Zn(2+) as cofactor.

It catalyses the reaction (S)-dihydroorotate + H2O = N-carbamoyl-L-aspartate + H(+). It functions in the pathway pyrimidine metabolism; UMP biosynthesis via de novo pathway; (S)-dihydroorotate from bicarbonate: step 3/3. Its function is as follows. Catalyzes the reversible cyclization of carbamoyl aspartate to dihydroorotate. This Aliivibrio fischeri (strain ATCC 700601 / ES114) (Vibrio fischeri) protein is Dihydroorotase.